The sequence spans 139 residues: Ribulose bisphosphate carboxylase small subunit (139 aa).

This sequence belongs to the RuBisCO small chain family. As to quaternary structure, heterohexadecamer of 8 large and 8 small subunits.

The protein localises to the plastid. It localises to the chloroplast. In terms of biological role, ruBisCO catalyzes two reactions: the carboxylation of D-ribulose 1,5-bisphosphate, the primary event in carbon dioxide fixation, as well as the oxidative fragmentation of the pentose substrate in the photorespiration process. Both reactions occur simultaneously and in competition at the same active site. Although the small subunit is not catalytic it is essential for maximal activity. This is Ribulose bisphosphate carboxylase small subunit from Trieres chinensis (Marine centric diatom).